Reading from the N-terminus, the 290-residue chain is Protein male abnormal 3 (290 aa).

2 consecutive DNA-binding regions (DM) follow at residues 28 to 74 and 94 to 142; these read CQRC…SKKK and CARC…KLRR. 2 disordered regions span residues 139-167 and 179-202; these read KLRR…MDME and IIGT…LSMS. Positions 146-155 are enriched in basic and acidic residues; the sequence is KSRDGKEPKR. Residues 182–202 show a composition bias toward low complexity; that stretch reads TSASPSPSSTTDTMSPSLSMS.

In terms of tissue distribution, expression is undetectable in hermaphrodites, but persists in males. In males, expressed in cells of the tail tip.

The protein localises to the nucleus. Its function is as follows. Transcription factor which binds the DNA motif 5'-[CGA][TCA][TA]ACAATGT[AT][TGA]C-3', probably as a monomer. Acts partially redundantly with the transcription factor dmd-3 to coordinate tail tip cell fusion and retraction and thereby regulate male tail tip morphogenesis. Promotes male-specific development of two tissues, the peripheral nervous system and the intestine. In the peripheral nervous system, directs differentiation of sensory ray neuroblasts into peripheral sense organs. In the intestine, causes repression of vitellogenin gene transcription. This is Protein male abnormal 3 from Caenorhabditis elegans.